Consider the following 252-residue polypeptide: MLKKRIIPCLDVKDGRVVKGINFVNLTDVGDPVDAAKAYYEAGCDELVFLDITATHEERDTTVEMVRRVAEQVFIPFTVGGGIRTVEDMKRMLQAGADKVAVNSSALANPQLLADCAEKFGSQCVVLAVDAKKEADGSWHVYLAGGRKDSGRDLLDWVQEAVSLGAGEILLTSMDKDGTKSGFDLPMLEAVSQVVSVPIIASGGAGSSQHILEVFEKTAATGALAASIFHYGQVSIAETKKAMQAAGLEVRI.

Residues Asp11 and Asp130 contribute to the active site.

Belongs to the HisA/HisF family. In terms of assembly, heterodimer of HisH and HisF.

The protein localises to the cytoplasm. The enzyme catalyses 5-[(5-phospho-1-deoxy-D-ribulos-1-ylimino)methylamino]-1-(5-phospho-beta-D-ribosyl)imidazole-4-carboxamide + L-glutamine = D-erythro-1-(imidazol-4-yl)glycerol 3-phosphate + 5-amino-1-(5-phospho-beta-D-ribosyl)imidazole-4-carboxamide + L-glutamate + H(+). The protein operates within amino-acid biosynthesis; L-histidine biosynthesis; L-histidine from 5-phospho-alpha-D-ribose 1-diphosphate: step 5/9. Functionally, IGPS catalyzes the conversion of PRFAR and glutamine to IGP, AICAR and glutamate. The HisF subunit catalyzes the cyclization activity that produces IGP and AICAR from PRFAR using the ammonia provided by the HisH subunit. This Streptococcus sanguinis (strain SK36) protein is Imidazole glycerol phosphate synthase subunit HisF.